The sequence spans 191 residues: Adenylate kinase (191 aa).

12-17 is a binding site for ATP; that stretch reads GSGKTT. Residues 33–62 are NMP; it reads STGDLLRAEVASGSELGKLIDSFISKGNLV. AMP-binding positions include Thr34, Arg39, 60–62, 87–90, and Gln94; these read NLV and GYPR. Residues 129–135 form an LID region; sequence GRARGAD. Arg130 lines the ATP pocket. AMP contacts are provided by Arg132 and Arg144. Arg172 contributes to the ATP binding site.

The protein belongs to the adenylate kinase family. In terms of assembly, monomer.

The protein localises to the cytoplasm. The enzyme catalyses AMP + ATP = 2 ADP. Its pathway is purine metabolism; AMP biosynthesis via salvage pathway; AMP from ADP: step 1/1. Catalyzes the reversible transfer of the terminal phosphate group between ATP and AMP. Plays an important role in cellular energy homeostasis and in adenine nucleotide metabolism. The polypeptide is Adenylate kinase (Campylobacter fetus subsp. fetus (strain 82-40)).